Here is a 425-residue protein sequence, read N- to C-terminus: Formyl-CoA:oxalate CoA-transferase (425 aa).

CoA is bound by residues 17 to 18, R38, 72 to 75, 96 to 98, R104, and 136 to 139; these read QS, LDTK, NFG, and KVYE. D168 serves as the catalytic Nucleophile. 247-249 serves as a coordination point for substrate; the sequence is GGQ.

It belongs to the CoA-transferase III family. Frc subfamily. As to quaternary structure, homodimer.

It carries out the reaction formyl-CoA + oxalate = oxalyl-CoA + formate. The protein operates within metabolic intermediate degradation; oxalate degradation; CO(2) and formate from oxalate: step 1/2. Its function is as follows. Involved in the catabolism of oxalate and in the adapatation to low pH via the induction of the oxalate-dependent acid tolerance response (ATR). Catalyzes the transfer of the CoA moiety from formyl-CoA to oxalate. The protein is Formyl-CoA:oxalate CoA-transferase of Bradyrhizobium diazoefficiens (strain JCM 10833 / BCRC 13528 / IAM 13628 / NBRC 14792 / USDA 110).